Here is a 435-residue protein sequence, read N- to C-terminus: T-box transcription factor T (435 aa).

The T-box DNA-binding region spans 51–219; the sequence is LWLRFKELTN…YNPFAKAFLD (169 aa). Positions 279–308 are disordered; the sequence is YPTLRSHRSSPYPSPYAHRNNSPTYSDNSP. Positions 297 to 308 are enriched in polar residues; that stretch reads RNNSPTYSDNSP.

Monomer. In terms of tissue distribution, detected in testis, but not in other, normal tissues. Detected in lung tumors (at protein level).

It is found in the nucleus. Functionally, involved in the transcriptional regulation of genes required for mesoderm formation and differentiation. Binds to a palindromic T site 5'-TTCACACCTAGGTGTGAA-3' DNA sequence and activates gene transcription when bound to such a site. This Homo sapiens (Human) protein is T-box transcription factor T.